We begin with the raw amino-acid sequence, 156 residues long: ATP synthase subunit b (156 aa).

Residues 12–32 (VAFFIFVLFCMKFVWPPVIAA) traverse the membrane as a helical segment.

Belongs to the ATPase B chain family. In terms of assembly, F-type ATPases have 2 components, F(1) - the catalytic core - and F(0) - the membrane proton channel. F(1) has five subunits: alpha(3), beta(3), gamma(1), delta(1), epsilon(1). F(0) has three main subunits: a(1), b(2) and c(10-14). The alpha and beta chains form an alternating ring which encloses part of the gamma chain. F(1) is attached to F(0) by a central stalk formed by the gamma and epsilon chains, while a peripheral stalk is formed by the delta and b chains.

The protein resides in the cell inner membrane. Its function is as follows. F(1)F(0) ATP synthase produces ATP from ADP in the presence of a proton or sodium gradient. F-type ATPases consist of two structural domains, F(1) containing the extramembraneous catalytic core and F(0) containing the membrane proton channel, linked together by a central stalk and a peripheral stalk. During catalysis, ATP synthesis in the catalytic domain of F(1) is coupled via a rotary mechanism of the central stalk subunits to proton translocation. Component of the F(0) channel, it forms part of the peripheral stalk, linking F(1) to F(0). This Pseudomonas aeruginosa (strain UCBPP-PA14) protein is ATP synthase subunit b.